A 474-amino-acid polypeptide reads, in one-letter code: Cysteine--tRNA ligase (474 aa).

Cys27 contributes to the Zn(2+) binding site. The 'HIGH' region signature appears at 29 to 39 (ITPYDHMHVGH). Residues Cys213, His238, and Glu242 each coordinate Zn(2+). Positions 271-275 (KMSKS) match the 'KMSKS' region motif. Lys274 contacts ATP.

It belongs to the class-I aminoacyl-tRNA synthetase family. It depends on Zn(2+) as a cofactor.

Its subcellular location is the cytoplasm. It catalyses the reaction tRNA(Cys) + L-cysteine + ATP = L-cysteinyl-tRNA(Cys) + AMP + diphosphate. This Pyrobaculum neutrophilum (strain DSM 2338 / JCM 9278 / NBRC 100436 / V24Sta) (Thermoproteus neutrophilus) protein is Cysteine--tRNA ligase.